A 55-amino-acid polypeptide reads, in one-letter code: MAKATTIKIKLLSTADTGFFYVTKKNSRTMTDKMTKRKYDPIARKHVEFKETKIK.

Belongs to the bacterial ribosomal protein bL33 family.

This is Large ribosomal subunit protein bL33 from Chelativorans sp. (strain BNC1).